A 324-amino-acid polypeptide reads, in one-letter code: Homeobox protein engrailed-2 (324 aa).

Disordered stretches follow at residues 1–59 (MEEK…HQHP), 89–174 (GGAR…VLKA), and 215–240 (DRPSSGPRSRKPKKKNPNKEDKRPRT). The span at 89–110 (GGARGGEGGAGTTEGGGGGAGG) shows a compositional bias: gly residues. The segment at residues 235-294 (DKRPRTAFTAEQLQRLKAEFQTNRYLTEQRRQSLAQELSLNESQIKIWFQNKRAKIKKAT) is a DNA-binding region (homeobox).

The protein belongs to the engrailed homeobox family. As to expression, cerebellar granule cells.

It localises to the nucleus. The polypeptide is Homeobox protein engrailed-2 (En2) (Mus musculus (Mouse)).